Consider the following 615-residue polypeptide: DNA mismatch repair protein MutL (615 aa).

The disordered stretch occupies residues 363 to 397 (FAEPAAREPVAPRYTPAPASGSRPAAPWPNAQPGY). Residues 364 to 391 (AEPAAREPVAPRYTPAPASGSRPAAPWP) are compositionally biased toward low complexity.

The protein belongs to the DNA mismatch repair MutL/HexB family.

Its function is as follows. This protein is involved in the repair of mismatches in DNA. It is required for dam-dependent methyl-directed DNA mismatch repair. May act as a 'molecular matchmaker', a protein that promotes the formation of a stable complex between two or more DNA-binding proteins in an ATP-dependent manner without itself being part of a final effector complex. The protein is DNA mismatch repair protein MutL of Escherichia coli O9:H4 (strain HS).